The following is a 144-amino-acid chain: Transcription antitermination protein NusB (144 aa).

This sequence belongs to the NusB family.

Involved in transcription antitermination. Required for transcription of ribosomal RNA (rRNA) genes. Binds specifically to the boxA antiterminator sequence of the ribosomal RNA (rrn) operons. The sequence is that of Transcription antitermination protein NusB from Histophilus somni (strain 2336) (Haemophilus somnus).